We begin with the raw amino-acid sequence, 911 residues long: Protein translocase subunit SecA (911 aa).

ATP is bound by residues Gln-86, 104-108 (GEGKT), and Asp-494. Positions 856-911 (VEGIDAPQRPAQLRFTGPSEDGQSAVTRSGTDSGATVAAGTNRRSRRQAERRGRRG) are disordered. Over residues 876–889 (DGQSAVTRSGTDSG) the composition is skewed to polar residues. Positions 902–911 (RQAERRGRRG) are enriched in basic and acidic residues.

Belongs to the SecA family. As to quaternary structure, monomer and homodimer. Part of the essential Sec protein translocation apparatus which comprises SecA, SecYEG and auxiliary proteins SecDF. Other proteins may also be involved.

Its subcellular location is the cell membrane. The protein resides in the cytoplasm. It carries out the reaction ATP + H2O + cellular proteinSide 1 = ADP + phosphate + cellular proteinSide 2.. Functionally, part of the Sec protein translocase complex. Interacts with the SecYEG preprotein conducting channel. Has a central role in coupling the hydrolysis of ATP to the transfer of proteins into and across the cell membrane, serving as an ATP-driven molecular motor driving the stepwise translocation of polypeptide chains across the membrane. The sequence is that of Protein translocase subunit SecA from Micrococcus luteus (strain ATCC 4698 / DSM 20030 / JCM 1464 / CCM 169 / CCUG 5858 / IAM 1056 / NBRC 3333 / NCIMB 9278 / NCTC 2665 / VKM Ac-2230) (Micrococcus lysodeikticus).